A 177-amino-acid chain; its full sequence is Putative 3-methyladenine DNA glycosylase (177 aa).

This sequence belongs to the DNA glycosylase MPG family.

In Rickettsia felis (strain ATCC VR-1525 / URRWXCal2) (Rickettsia azadi), this protein is Putative 3-methyladenine DNA glycosylase.